We begin with the raw amino-acid sequence, 84 residues long: Large ribosomal subunit protein bL27 (84 aa).

Residues 1 to 21 (MATKKAGGSSRNGRDSAGRRL) are disordered.

Belongs to the bacterial ribosomal protein bL27 family.

This chain is Large ribosomal subunit protein bL27, found in Pelagibacter ubique (strain HTCC1062).